The primary structure comprises 400 residues: 2-[(L-alanin-3-ylcarbamoyl)methyl]-2-hydroxybutanedioate decarboxylase (400 aa).

Position 50 is an N6-(pyridoxal phosphate)lysine (K50). Residues G228 and 266 to 269 each bind pyridoxal 5'-phosphate; that span reads ECGR. C344 (proton donor) is an active-site residue. Y373 contacts pyridoxal 5'-phosphate.

Belongs to the Orn/Lys/Arg decarboxylase class-II family. In terms of assembly, homodimer. Requires pyridoxal 5'-phosphate as cofactor.

It carries out the reaction 2-[(L-alanin-3-ylcarbamoyl)methyl]-2-hydroxybutanedioate + H(+) = 2-[(2-aminoethylcarbamoyl)methyl]-2-hydroxybutanedioate + CO2. It participates in siderophore biosynthesis. In terms of biological role, catalyzes the decarboxylation of citryl-L-2,3-diaminopropionic acid to citryl-diaminoethane, the second step in staphyloferrin B biosynthesis. The polypeptide is 2-[(L-alanin-3-ylcarbamoyl)methyl]-2-hydroxybutanedioate decarboxylase (Staphylococcus aureus (strain NCTC 8325 / PS 47)).